Consider the following 216-residue polypeptide: MVKNLLLDIEGTVGSISFVKDKLFPYAASRYESYVNENYESDENLRELGKTPEEALINLRKLHAEGSKERSFKMVQGRIWKKGYESNELTSHLFPDVVPAIQRSLQLGMRVYIYSSGSVPAQKLYFEHSDAGNLLKYFSGYYDTTIGLKTECGSYVKIVGNSNPREWLFLSDNINELKAARKVGLHTGLVVRPGNDPVVDTSGFPVYNSFEILFTE.

Mg(2+)-binding residues include Asp-8 and Glu-10. Residues 115–116 and Lys-149 contribute to the substrate site; that span reads SS. Asp-172 is a binding site for Mg(2+).

The protein belongs to the HAD-like hydrolase superfamily. MasA/MtnC family. As to quaternary structure, monomer. Mg(2+) is required as a cofactor.

The protein resides in the cytoplasm. The protein localises to the nucleus. The catalysed reaction is 5-methylsulfanyl-2,3-dioxopentyl phosphate + H2O = 1,2-dihydroxy-5-(methylsulfanyl)pent-1-en-3-one + phosphate. It participates in amino-acid biosynthesis; L-methionine biosynthesis via salvage pathway; L-methionine from S-methyl-5-thio-alpha-D-ribose 1-phosphate: step 3/6. Its pathway is amino-acid biosynthesis; L-methionine biosynthesis via salvage pathway; L-methionine from S-methyl-5-thio-alpha-D-ribose 1-phosphate: step 4/6. In terms of biological role, bifunctional enzyme that catalyzes the enolization of 2,3-diketo-5-methylthiopentyl-1-phosphate (DK-MTP-1-P) into the intermediate 2-hydroxy-3-keto-5-methylthiopentenyl-1-phosphate (HK-MTPenyl-1-P), which is then dephosphorylated to form the acireductone 1,2-dihydroxy-3-keto-5-methylthiopentene (DHK-MTPene). This chain is Enolase-phosphatase E1 (utr4), found in Schizosaccharomyces pombe (strain 972 / ATCC 24843) (Fission yeast).